The sequence spans 792 residues: Lon protease (792 aa).

One can recognise a Lon N-terminal domain in the interval aspartate 16 to leucine 211. Glycine 361 to threonine 368 serves as a coordination point for ATP. Positions threonine 597–proline 778 constitute a Lon proteolytic domain. Residues serine 684 and lysine 727 contribute to the active site.

The protein belongs to the peptidase S16 family. In terms of assembly, homohexamer. Organized in a ring with a central cavity.

It localises to the cytoplasm. It carries out the reaction Hydrolysis of proteins in presence of ATP.. ATP-dependent serine protease that mediates the selective degradation of mutant and abnormal proteins as well as certain short-lived regulatory proteins. Required for cellular homeostasis and for survival from DNA damage and developmental changes induced by stress. Degrades polypeptides processively to yield small peptide fragments that are 5 to 10 amino acids long. Binds to DNA in a double-stranded, site-specific manner. The protein is Lon protease of Phenylobacterium zucineum (strain HLK1).